The following is a 1488-amino-acid chain: Putative E3 ubiquitin-protein ligase LIN (1488 aa).

Disordered regions lie at residues 297 to 330, 351 to 414, and 432 to 500; these read GFSMTTRRSNDGLNETTRENIASNSNHSKGEQSS, YDAS…PLRR, and IVSD…SSSS. Residues 366 to 380 show a composition bias toward basic and acidic residues; it reads EPKKNIKDEDVEPKV. Polar residues predominate over residues 382–411; it reads RSNQKNQMNSPNISPMESPRRASNYSSTNP. Residues 432 to 444 show a composition bias toward low complexity; the sequence is IVSDHSLSSSPDT. Polar residues predominate over residues 468–486; it reads SQTPSMNQDNENSLVLNDS. The U-box domain maps to 512-587; the sequence is KPPKDFVCPI…VSWKEQNPEL (76 aa). WD repeat units lie at residues 1207-1244, 1249-1290, 1412-1451, and 1456-1488; these read SSNGEVLSLHYLNGQVLSGHADGTIKVWDARKRIPRVI, EHKK…DVYD, SLSTGLDVHRVAINSDFIFAGTKFGTIEVWLKDKFTRVAS, and GGNTKITSLASDADGMMLFVGSSDGKIQVWALD.

In terms of tissue distribution, expressed in roots and nodules.

It catalyses the reaction S-ubiquitinyl-[E2 ubiquitin-conjugating enzyme]-L-cysteine + [acceptor protein]-L-lysine = [E2 ubiquitin-conjugating enzyme]-L-cysteine + N(6)-ubiquitinyl-[acceptor protein]-L-lysine.. The protein operates within protein modification; protein ubiquitination. Its function is as follows. Putative E3 ubiquitin ligase involved in the rhizobial infection process. Plays an important role in the early steps of bacterial symbiont thread formation in roots, and in growth, differentiation and maintenance of nodules. The chain is Putative E3 ubiquitin-protein ligase LIN from Medicago truncatula (Barrel medic).